The chain runs to 513 residues: uncharacterized protein (513 aa).

The region spanning 11-219 (HLEVERKFDV…SKLARVLGAT (209 aa)) is the CYTH domain. Positions 228–506 (PQPPADPVHR…LEAALRKLDK (279 aa)) constitute a CHAD domain.

This is an uncharacterized protein from Mycobacterium tuberculosis (strain ATCC 25618 / H37Rv).